A 263-amino-acid polypeptide reads, in one-letter code: Proteasome subunit beta type-4 (263 aa).

Methionine 1 carries the post-translational modification N-acetylmethionine. Positions 1 to 44 (MEAFWESRTGHWAGGPAPGQFYRVPSTPSCLMDPMSAPARPITR) are excised as a propeptide. Phosphoserine is present on serine 26. Phosphotyrosine is present on tyrosine 101.

This sequence belongs to the peptidase T1B family. In terms of assembly, the 26S proteasome consists of a 20S proteasome core and two 19S regulatory subunits. The 20S proteasome core is a barrel-shaped complex made of 28 subunits that are arranged in four stacked rings. The two outer rings are each formed by seven alpha subunits, and the two inner rings are formed by seven beta subunits. The proteolytic activity is exerted by three beta-subunits PSMB5, PSMB6 and PSMB7. Forms a ternary complex with SMAD1 and OAZ1 before PSMB4 is incorporated into the 20S proteasome. Interacts with PRPF19.

Its subcellular location is the cytoplasm. The protein localises to the nucleus. In terms of biological role, non-catalytic component of the 20S core proteasome complex involved in the proteolytic degradation of most intracellular proteins. This complex plays numerous essential roles within the cell by associating with different regulatory particles. Associated with two 19S regulatory particles, forms the 26S proteasome and thus participates in the ATP-dependent degradation of ubiquitinated proteins. The 26S proteasome plays a key role in the maintenance of protein homeostasis by removing misfolded or damaged proteins that could impair cellular functions, and by removing proteins whose functions are no longer required. Associated with the PA200 or PA28, the 20S proteasome mediates ubiquitin-independent protein degradation. This type of proteolysis is required in several pathways including spermatogenesis (20S-PA200 complex) or generation of a subset of MHC class I-presented antigenic peptides (20S-PA28 complex). SMAD1/OAZ1/PSMB4 complex mediates the degradation of the CREBBP/EP300 repressor SNIP1. The polypeptide is Proteasome subunit beta type-4 (Psmb4) (Rattus norvegicus (Rat)).